The primary structure comprises 862 residues: Axin-1 (862 aa).

The segment at 1–78 (MNIQEQGFPL…GYEPEGSASP (78 aa)) is disordered. Residues 20–29 (APRPPVPGEE) carry the Tankyrase-binding motif motif. 2 positions are modified to phosphoserine; by CK1: Ser-75 and Ser-77. One can recognise an RGS domain in the interval 88–211 (SLHSLLDDQD…LKSDIYLEYT (124 aa)). An interaction with TP53 region spans residues 209 to 338 (EYTRTGSESP…DADTLSLTDS (130 aa)). Disordered stretches follow at residues 215–289 (SESP…YSEG) and 316–344 (TSANDSEQQSLSSDADTLSLTDSSVDGIP). A Phosphoserine; by CK1 modification is found at Ser-217. Over residues 242 to 258 (NEDEEWKCDQDMDEDDG) the composition is skewed to acidic residues. Low complexity predominate over residues 325–339 (SLSSDADTLSLTDSS). The interval 348-433 (IRKQHRREMQ…DGDPSSGPPG (86 aa)) is interaction with GSK3B. Residues 353–411 (RREMQESVQVNGRVPLPHIPRTYRVPKEVRVEPQKFAEELIHRLEAVQRTREAEEKLEE) are interaction with SIAH1 and SIAH2. Residues 413–441 (LKRVRMEEEGEDGDPSSGPPGPCHKLPPA) are disordered. The span at 429–441 (SGPPGPCHKLPPA) shows a compositional bias: pro residues. Residues 434 to 502 (PCHKLPPAPA…SPDSGHVAKM (69 aa)) are interaction with CTNNB1. The residue at position 469 (Ser-469) is a Phosphoserine; by CK1. A disordered region spans residues 480–500 (RTPGRQSPGPGHRSPDSGHVA). Residue Thr-481 is modified to Phosphothreonine; by GSK3-beta. A phosphoserine mark is found at Ser-486, Ser-493, and Ser-511. The tract at residues 507-757 (GGAASGHGKH…PVLHVVPAVS (251 aa)) is interaction with RNF111. Positions 531-544 (HHRHVHHHVHHSTA) are enriched in basic residues. Disordered regions lie at residues 531–629 (HHRH…AEKN) and 641–679 (KEISRHRRTGHGSSGTRKPQPHENSRPLSLEHPWAGPQL). The segment covering 545–556 (RPKEQVEAEATR) has biased composition (basic and acidic residues). The interval 575 to 789 (SRGYSESVGA…CDSIVVAYYF (215 aa)) is interaction with PPP2CA. Ser-581 is modified (phosphoserine). The tract at residues 677 to 752 (PQLRTSVQPS…RPACAPVLHV (76 aa)) is interaction with HIPK2. In terms of domain architecture, DIX spans 780 to 862 (CDSIVVAYYF…KIIGKVEKVD (83 aa)). Glycyl lysine isopeptide (Lys-Gly) (interchain with G-Cter in SUMO) cross-links involve residues Lys-857 and Lys-860.

Homodimer. Interacts with ZBED3; the interaction is direct, enhanced by protein kinase GSK3B and casein kinase CSNK1E activities and decreases GSK3B-induced beta-catenin serine and threonine phosphorylations. Component of the beta-catenin destruction complex, containing at least, CTNNB1, an axin and GSK3B, that regulates CTNNB1 protein levels through phosphorylation and ubiquitination. Interacts with CTNNB1 (via the armadillo repeats 2-7). Interacts with GSK3B; the interaction hyperphosphorylates CTNNB1 leading to its ubiquitination and destruction. Component of the AXIN1-HIPK2-TP53 complex. Interacts directly in the complex with TP53 and HIPK2. Interacts with DAXX; the interaction stimulates the interaction of DAXX with TP53, stimulates 'Ser-46' phosphorylation of TP53 and induces cell death on UV irradiation. Also binds APC, SMAD6, SMAD7 and RNF111. Interacts with DIXDC1; prevents interaction with MAP3K1. Interacts with MAP3K4. Interacts with ANKRD6 and AIDA. Interacts with MDFI; the interaction decreases AXIN1-mediated JUN N-terminal kinase (JNK) activation. Interacts with MDFIC; the interaction inhibits beta-cateninin-mediated signaling and AXIN1-mediated JUN N-terminal kinase (JNK) activation. Interacts with LRP5 (via its phosphorylated PPPSP motifs); the interaction is stimulated by WNT1 and GSK3B and activates beta-catenin signaling. Interacts (via the C-terminal) with PPP1CA; the interaction dephosphorylates AXIN1 and regulates interaction with GSK3B. Interacts with PPP2CA; the interaction dephosphorylates AXIN1. Interacts with MACF1. Found in a complex composed of MACF1, APC, AXIN1, CTNNB1 and GSK3B. Interacts with TNKS. Interacts with DAB2; the interaction is mutually exclusive with the AXIN1:PPP1CA interaction. Interacts with WDR26. Interacts with GID8. Interacts with SIAH1 and SIAH2; both probably catalyze AXIN1 ubiquitination and subsequent proteasome-mediated ubiquitin-dependent degradation. Interaction with GSK3B and AXIN1 is competitive. Phosphorylation and dephosphorylation of AXIN1 regulates assembly and function of the beta-catenin complex. Phosphorylated by CK1 and GSK3B. Dephosphorylated by PPP1CA and PPP2CA. Phosphorylation by CK1 enhances binding of GSK3B to AXIN1. Post-translationally, ADP-ribosylated by tankyrase TNKS and TNKS2. Poly-ADP-ribosylated protein is recognized by RNF146, followed by ubiquitination at 'Lys-48' and subsequent activation of the Wnt signaling pathway. In terms of processing, ubiquitinated by RNF146 when poly-ADP-ribosylated, leading to its degradation and subsequent activation of the Wnt signaling pathway. Sumoylation at Lys-857 and Lys-860 prevents ubiquitination and degradation. Sumoylation is required for AXIN1-mediated JNK activation. Deubiquitinated by USP34, deubiquitinated downstream of beta-catenin stabilization step: deubiquitination is important for nuclear accumulation during Wnt signaling to positively regulate beta-catenin (CTNBB1)-mediated transcription. Ubiquitination by SIAH1 and SIAH2 induces its proteasomal degradation as part of the activation of the Wnt signaling pathway. As to expression, ubiquitously expressed.

Its subcellular location is the cytoplasm. The protein localises to the nucleus. It is found in the membrane. It localises to the cell membrane. Functionally, component of the beta-catenin destruction complex required for regulating CTNNB1 levels through phosphorylation and ubiquitination, and modulating Wnt-signaling. Controls dorsoventral patterning via two opposing effects; down-regulates CTNNB1 to inhibit the Wnt signaling pathway and ventralize embryos, but also dorsalizes embryos by activating a Wnt-independent JNK signaling pathway. In Wnt signaling, probably facilitates the phosphorylation of CTNNB1 and APC by GSK3B. Likely to function as a tumor suppressor. Enhances TGF-beta signaling by recruiting the RNF111 E3 ubiquitin ligase and promoting the degradation of inhibitory SMAD7. Also a component of the AXIN1-HIPK2-TP53 complex which controls cell growth, apoptosis and development. Facilitates the phosphorylation of TP53 by HIPK2 upon ultraviolet irradiation. This is Axin-1 (AXIN1) from Homo sapiens (Human).